A 166-amino-acid polypeptide reads, in one-letter code: UPF0304 protein VFMJ11_1926 (166 aa).

Belongs to the UPF0304 family.

The protein is UPF0304 protein VFMJ11_1926 of Aliivibrio fischeri (strain MJ11) (Vibrio fischeri).